Here is a 252-residue protein sequence, read N- to C-terminus: Protein HEAT-INDUCED TAS1 TARGET 2 (252 aa).

It belongs to the heat induced plant HTT protein family. As to expression, expressed ubiquitously, including in seedlings, leaves, stems, inflorescences and siliques.

The protein resides in the cytoplasm. The protein localises to the nucleus. Mediates both basal and acquired thermotolerance via HSFA1s-directed pathways (e.g. HSFA1A, HSFA1B, and HSFA1D). Triggers the expression of HSFA1A and HSFA1B. The sequence is that of Protein HEAT-INDUCED TAS1 TARGET 2 from Arabidopsis thaliana (Mouse-ear cress).